The sequence spans 365 residues: Endophilin-B1 (365 aa).

Met1 carries the N-acetylmethionine modification. The segment at 1–30 (MNIMDFNVKKLAADAGTFLSRAVQFTEEKL) is membrane-binding amphipathic helix. The required for membrane binding stretch occupies residues 1 to 37 (MNIMDFNVKKLAADAGTFLSRAVQFTEEKLGQAEKTE). The region spanning 27-261 (EEKLGQAEKT…LGSFPSNYLS (235 aa)) is the BAR domain. Thr145 bears the Phosphothreonine; by CDK5 mark. A coiled-coil region spans residues 155–186 (YKTIAKERKLLQNKRLDLDAAKTRLKKAKAAE). Positions 305–365 (SNNRKARVLY…VPITYLELLN (61 aa)) constitute an SH3 domain.

The protein belongs to the endophilin family. As to quaternary structure, homodimer, and heterodimer with SH3GLB2. Binds BAX; induction of apoptosis augments BAX binding. Binds DNM1, HTT, AMPH, BIN1 and ARFGAP1. Interacts with UVRAG; UVRAG bridges the interaction to BECN1 indicative for an association with the PI3K complex II (PI3KC3-C2). Isoform 3 interacts with PPP1CC; this interaction leads to the inhibition of phosphatase activity. Phosphorylated at Thr-145 by CDK5; this phosphorylation is required for autophagy induction in starved neurons and facilitates homodimerization. Isoform 1 is widely expressed. Isoform 2 is brain-specific. Isoform 3 is predominantly expressed in testis, but it is also detected in liver and, at much lower levels, in skin, stomach and ovary.

The protein localises to the cytoplasm. It localises to the golgi apparatus membrane. It is found in the mitochondrion outer membrane. Its subcellular location is the cytoplasmic vesicle. The protein resides in the autophagosome membrane. The protein localises to the midbody. Its function is as follows. May be required for normal outer mitochondrial membrane dynamics. Required for coatomer-mediated retrograde transport in certain cells. May recruit other proteins to membranes with high curvature. May promote membrane fusion. Involved in activation of caspase-dependent apoptosis by promoting BAX/BAK1 activation. Isoform 1 acts proapoptotic in fibroblasts. Involved in caspase-independent apoptosis during nutrition starvation and involved in the regulation of autophagy. Activates lipid kinase activity of PIK3C3 during autophagy probably by associating with the PI3K complex II (PI3KC3-C2). Associated with PI3KC3-C2 during autophagy may regulate the trafficking of ATG9A from the Golgi complex to the peripheral cytoplasm for the formation of autophagosomes by inducing Golgi membrane tubulation and fragmentation. Involved in regulation of degradative endocytic trafficking and cytokinesis, probably in the context of PI3KC3-C2. Isoform 2 acts antiapoptotic in neuronal cells; involved in maintenance of mitochondrial morphology and promotes neuronal viability. This Mus musculus (Mouse) protein is Endophilin-B1 (Sh3glb1).